The primary structure comprises 350 residues: Bifunctional methylenetetrahydrofolate dehydrogenase/cyclohydrolase, mitochondrial (350 aa).

A mitochondrion-targeting transit peptide spans 1-35; sequence MASVSLLSALAVRLLRPTHGCHPRLQPFHLAAVRN. K50 carries the post-translational modification N6-acetyllysine; alternate. Residue K50 forms a Glycyl lysine isopeptide (Lys-Gly) (interchain with G-Cter in SUMO2); alternate linkage. Substrate-binding positions include 84-88 and 131-133; these read YVLNK and VQL. NAD(+) is bound by residues 200–202 and R233; that span reads GRS. Residue 309–313 participates in substrate binding; sequence PGGVG.

Belongs to the tetrahydrofolate dehydrogenase/cyclohydrolase family. As to quaternary structure, homodimer. Mg(2+) serves as cofactor.

The protein localises to the mitochondrion. The enzyme catalyses (6R)-5,10-methylene-5,6,7,8-tetrahydrofolate + NAD(+) = (6R)-5,10-methenyltetrahydrofolate + NADH. It carries out the reaction (6R)-5,10-methenyltetrahydrofolate + H2O = (6R)-10-formyltetrahydrofolate + H(+). Although its dehydrogenase activity is NAD-specific, it can also utilize NADP at a reduced efficiency. The chain is Bifunctional methylenetetrahydrofolate dehydrogenase/cyclohydrolase, mitochondrial (Mthfd2) from Mus musculus (Mouse).